The following is a 532-amino-acid chain: All-trans-retinyl ester 13-cis isomerohydrolase (532 aa).

Cys-112 carries S-palmitoyl cysteine; in membrane form lipidation. The Fe cation site is built by His-180, His-241, and His-313. Cys-329 carries the S-palmitoyl cysteine; in membrane form lipid modification. His-527 contributes to the Fe cation binding site.

The protein belongs to the carotenoid oxygenase family. It depends on Fe(2+) as a cofactor. Post-translationally, palmitoylated. In terms of tissue distribution, predominantly expressed in brain. Expressed at a low level in the eye.

It is found in the cytoplasm. The protein resides in the cell membrane. The catalysed reaction is an all-trans-retinyl ester + H2O = 13-cis-retinol + a fatty acid + H(+). It carries out the reaction lutein = (3R,3'S)-zeaxanthin. In terms of biological role, specifically generates 13-cis retinol, a stereoisomeric form of retinoic acid. Capable of catalyzing the isomerization of lutein to meso-zeaxanthin an eye-specific carotenoid. In Danio rerio (Zebrafish), this protein is All-trans-retinyl ester 13-cis isomerohydrolase (rpe65b).